The sequence spans 378 residues: Probable dihydroorotase-like protein (378 aa).

This sequence belongs to the metallo-dependent hydrolases superfamily. DHOase family. PyrC' subfamily.

In terms of biological role, non-functional DHOase. The protein is Probable dihydroorotase-like protein (pyrC') of Helicobacter pylori (strain J99 / ATCC 700824) (Campylobacter pylori J99).